A 363-amino-acid chain; its full sequence is Aminomethyltransferase (363 aa).

The protein belongs to the GcvT family. In terms of assembly, the glycine cleavage system is composed of four proteins: P, T, L and H.

The catalysed reaction is N(6)-[(R)-S(8)-aminomethyldihydrolipoyl]-L-lysyl-[protein] + (6S)-5,6,7,8-tetrahydrofolate = N(6)-[(R)-dihydrolipoyl]-L-lysyl-[protein] + (6R)-5,10-methylene-5,6,7,8-tetrahydrofolate + NH4(+). The glycine cleavage system catalyzes the degradation of glycine. This Thermosipho melanesiensis (strain DSM 12029 / CIP 104789 / BI429) protein is Aminomethyltransferase.